The primary structure comprises 426 residues: MLTIKDIHALEVMDSRGNPTIQASVILSDNTKASAIVPSGASTGKREALELRDNDKTRFLGKGVLRACENVNSVIKHHLIGLEATSQAFVDERLRALDGTPNYANLGANAVLGVSMALARASAKALNLPLYRYLGGANALTLPVPMLNIINGGTHANNSIDFQEYMIMPLGFESFREALRASAEVYHTLKKLLDEKNQLTSVGDEGGFAPNFNNNVEPLEIISQAIEKAGYKLGEEIALALDVASSELVDEHFNYHLKGENKILDSHELVAYYKELVAKYPIVSIEDGLSEDDWEGWAFLSKELGRQIQLVGDDLFVTNASILQKGIEKNIANAILIKPNQIGTISETLETIRLAKHHAYQCVMSHRSGESEDSFIADFAVALNTGEIKTGSTARSERIAKYNRLLEIEHELKGGIYIGKELFKHG.

Position 163 (Q163) interacts with (2R)-2-phosphoglycerate. E205 functions as the Proton donor in the catalytic mechanism. Mg(2+) contacts are provided by D242, E286, and D313. The (2R)-2-phosphoglycerate site is built by K338, R367, S368, and K389. Catalysis depends on K338, which acts as the Proton acceptor.

Belongs to the enolase family. The cofactor is Mg(2+).

Its subcellular location is the cytoplasm. It is found in the secreted. The protein localises to the cell surface. It catalyses the reaction (2R)-2-phosphoglycerate = phosphoenolpyruvate + H2O. It functions in the pathway carbohydrate degradation; glycolysis; pyruvate from D-glyceraldehyde 3-phosphate: step 4/5. Functionally, catalyzes the reversible conversion of 2-phosphoglycerate (2-PG) into phosphoenolpyruvate (PEP). It is essential for the degradation of carbohydrates via glycolysis. This is Enolase from Helicobacter pylori (strain G27).